The primary structure comprises 91 residues: Small integral membrane protein 12-B (91 aa).

Residues 12-34 (YAPYITFPVAFVVGAVGYQLEWF) traverse the membrane as a helical segment.

This sequence belongs to the SMIM12 family.

Its subcellular location is the membrane. This chain is Small integral membrane protein 12-B (smim12-b), found in Xenopus laevis (African clawed frog).